Here is a 506-residue protein sequence, read N- to C-terminus: ATP synthase subunit alpha (506 aa).

Residue 170–177 coordinates ATP; that stretch reads GDRQTGKT.

This sequence belongs to the ATPase alpha/beta chains family. In terms of assembly, F-type ATPases have 2 components, CF(1) - the catalytic core - and CF(0) - the membrane proton channel. CF(1) has five subunits: alpha(3), beta(3), gamma(1), delta(1), epsilon(1). CF(0) has four main subunits: a(1), b(1), b'(1) and c(9-12).

It localises to the cellular thylakoid membrane. It carries out the reaction ATP + H2O + 4 H(+)(in) = ADP + phosphate + 5 H(+)(out). Produces ATP from ADP in the presence of a proton gradient across the membrane. The alpha chain is a regulatory subunit. The protein is ATP synthase subunit alpha of Synechococcus sp. (strain CC9605).